A 371-amino-acid polypeptide reads, in one-letter code: E3 ubiquitin-protein ligase RHF1A (371 aa).

Residues Cys-46–Trp-87 form an RING-type; atypical zinc finger. Disordered regions lie at residues His-199 to Pro-254 and Glu-348 to Cys-371. The segment covering Gln-200–Asp-225 has biased composition (polar residues). Over residues Ser-226–Ser-252 the composition is skewed to low complexity.

As to quaternary structure, interacts with KRP6. In terms of tissue distribution, expressed in stems, flowers, green siliques, cauline leaves, seeds and roots.

The enzyme catalyses S-ubiquitinyl-[E2 ubiquitin-conjugating enzyme]-L-cysteine + [acceptor protein]-L-lysine = [E2 ubiquitin-conjugating enzyme]-L-cysteine + N(6)-ubiquitinyl-[acceptor protein]-L-lysine.. It participates in protein modification; protein ubiquitination. Functionally, E3 ubiquitin-protein ligase involved in the positive regulation of the gametogenesis progression. Mediates the proteasomal degradation of KRP6, a cyclin-dependent kinase inhibitor which accumulates during meiosis and blocks the progression of subsequent mitoses during gametophyte development. Functions in association with RHF2A. Possesses E3 ubiquitin-protein ligase activity when associated with the E2 enzyme UBC8 in vitro. This is E3 ubiquitin-protein ligase RHF1A from Arabidopsis thaliana (Mouse-ear cress).